Reading from the N-terminus, the 288-residue chain is Tryptophan 2,3-dioxygenase (288 aa).

Residues Phe-57 to His-61, Tyr-119, and Arg-123 each bind substrate. His-246 is a heme binding site. Thr-260 is a binding site for substrate.

This sequence belongs to the tryptophan 2,3-dioxygenase family. As to quaternary structure, homotetramer. The cofactor is heme.

The catalysed reaction is L-tryptophan + O2 = N-formyl-L-kynurenine. It participates in amino-acid degradation; L-tryptophan degradation via kynurenine pathway; L-kynurenine from L-tryptophan: step 1/2. Functionally, heme-dependent dioxygenase that catalyzes the oxidative cleavage of the L-tryptophan (L-Trp) pyrrole ring and converts L-tryptophan to N-formyl-L-kynurenine. Catalyzes the oxidative cleavage of the indole moiety. This is Tryptophan 2,3-dioxygenase from Pseudomonas aeruginosa (strain ATCC 15692 / DSM 22644 / CIP 104116 / JCM 14847 / LMG 12228 / 1C / PRS 101 / PAO1).